A 53-amino-acid polypeptide reads, in one-letter code: UPF0391 membrane protein PC1_0455 (53 aa).

A run of 2 helical transmembrane segments spans residues 4–24 (WGII…GGLA) and 30–47 (AAKI…LSLF).

Belongs to the UPF0391 family.

It localises to the cell membrane. This is UPF0391 membrane protein PC1_0455 from Pectobacterium carotovorum subsp. carotovorum (strain PC1).